The chain runs to 303 residues: Taste receptor type 2 member 13 (303 aa).

At 1–7 the chain is on the extracellular side; the sequence is MESALPS. A helical membrane pass occupies residues 8–28; that stretch reads IFTLVIIAEFIIGNLSNGFIV. The Cytoplasmic portion of the chain corresponds to 29–55; that stretch reads LINCIDWVSKRELSSVDKLLIILAISR. Residues 56-76 traverse the membrane as a helical segment; sequence IGLIWEILVSWFLALHYLAIF. Topologically, residues 77 to 85 are extracellular; the sequence is VSGTGLRIM. A helical membrane pass occupies residues 86–106; the sequence is IFSWIVSNHFNLWLATIFSIF. Topologically, residues 107 to 128 are cytoplasmic; it reads YLLKIASFSSPAFLYLKWRVNK. Residues 129–149 form a helical membrane-spanning segment; it reads VILMILLGTLVFLFLNLIQIN. The Extracellular portion of the chain corresponds to 150-184; the sequence is MHIKDWLDRYERNTTWNFSMSDFETFSVSVKFTMT. 2 N-linked (GlcNAc...) asparagine glycosylation sites follow: asparagine 162 and asparagine 166. A helical membrane pass occupies residues 185 to 205; it reads MFSLTPFTVAFISFLLLIFSL. Topologically, residues 206–232 are cytoplasmic; it reads QKHLQKMQLNYKGHRDPRTKVHTNALK. The helical transmembrane segment at 233–253 threads the bilayer; that stretch reads IVISFLLFYASFFLCVLISWI. The Extracellular segment spans residues 254-261; it reads SELYQNTV. The chain crosses the membrane as a helical span at residues 262–282; it reads IYMLCETIGVFSPSSHSFLLI. Residues 283 to 303 are Cytoplasmic-facing; sequence LGNAKLRQAFLLVAAKVWAKR.

Belongs to the G-protein coupled receptor T2R family. Expressed in subsets of taste receptor cells of the tongue and palate epithelium and exclusively in gustducin-positive cells.

It is found in the membrane. Receptor that may play a role in the perception of bitterness and is gustducin-linked. May play a role in sensing the chemical composition of the gastrointestinal content. The activity of this receptor may stimulate alpha gustducin, mediate PLC-beta-2 activation and lead to the gating of TRPM5. The sequence is that of Taste receptor type 2 member 13 (TAS2R13) from Homo sapiens (Human).